The primary structure comprises 379 residues: Cytochrome b (379 aa).

The next 4 membrane-spanning stretches (helical) occupy residues 33–53, 77–98, 113–133, and 178–198; these read FGSLLGMCLVIQILTGLFLAM, WLIRYLHANGASMFFICLFIHV, WNIGIILLLTTMATAFVGYVL, and FFAFHFILPFIIAAFALVHLL. Heme b-binding residues include His-83 and His-97. His-182 and His-196 together coordinate heme b. His-201 contacts a ubiquinone. Transmembrane regions (helical) follow at residues 226-246, 288-308, 320-340, and 347-367; these read IKDLLGIFLLLLVLMTLALFF, LGGVLALVLSILILAAFPLLN, VTQTIYWIFIANLLVLTWIGG, and FTTIGQIASITYFTIIIILIP.

Belongs to the cytochrome b family. The cytochrome bc1 complex contains 11 subunits: 3 respiratory subunits (MT-CYB, CYC1 and UQCRFS1), 2 core proteins (UQCRC1 and UQCRC2) and 6 low-molecular weight proteins (UQCRH/QCR6, UQCRB/QCR7, UQCRQ/QCR8, UQCR10/QCR9, UQCR11/QCR10 and a cleavage product of UQCRFS1). This cytochrome bc1 complex then forms a dimer. Heme b serves as cofactor.

Its subcellular location is the mitochondrion inner membrane. Component of the ubiquinol-cytochrome c reductase complex (complex III or cytochrome b-c1 complex) that is part of the mitochondrial respiratory chain. The b-c1 complex mediates electron transfer from ubiquinol to cytochrome c. Contributes to the generation of a proton gradient across the mitochondrial membrane that is then used for ATP synthesis. The protein is Cytochrome b (MT-CYB) of Akodon lindberghi (Lindbergh's grass mouse).